Consider the following 97-residue polypeptide: Citrate lyase acyl carrier protein (97 aa).

An O-(phosphoribosyl dephospho-coenzyme A)serine modification is found at Ser-14.

This sequence belongs to the CitD family. As to quaternary structure, oligomer with a subunit composition of (alpha,beta,gamma)6.

Its subcellular location is the cytoplasm. In terms of biological role, covalent carrier of the coenzyme of citrate lyase. The polypeptide is Citrate lyase acyl carrier protein (Rhodopseudomonas palustris (strain BisA53)).